The chain runs to 304 residues: Shiftless antiviral inhibitor of ribosomal frameshifting protein homolog (304 aa).

Residues 140-156 carry the Nuclear localization signal motif; the sequence is RRVPQRKEVSRCHRCRK. The Nuclear export signal signature appears at 278-287; it reads TENDIDDIIL.

The protein belongs to the SHFL family.

It is found in the cytoplasm. Its subcellular location is the nucleus. It localises to the P-body. In terms of biological role, inhibits programmed -1 ribosomal frameshifting (-1PRF) of a variety of mRNAs from viruses and cellular genes. Interacts with the -1PRF signal of target mRNA and translating ribosomes and causes premature translation termination at the frameshifting site. May exhibit antiviral activity. The polypeptide is Shiftless antiviral inhibitor of ribosomal frameshifting protein homolog (shfl) (Xenopus tropicalis (Western clawed frog)).